The primary structure comprises 350 residues: Thymidine kinase (350 aa).

Position 17–24 (17–24 (GPFGIGKT)) interacts with ATP. Glu-45 serves as the catalytic Proton acceptor. Residue Gln-86 participates in substrate binding. Arg-176 serves as a coordination point for ATP. Arg-182 serves as a coordination point for substrate.

This sequence belongs to the herpesviridae thymidine kinase family. Homodimer.

The enzyme catalyses thymidine + ATP = dTMP + ADP + H(+). In terms of biological role, catalyzes the transfer of the gamma-phospho group of ATP to thymidine to generate dTMP in the salvage pathway of pyrimidine synthesis. The dTMP serves as a substrate for DNA polymerase during viral DNA replication. Allows the virus to be reactivated and to grow in non-proliferative cells lacking a high concentration of phosphorylated nucleic acid precursors. The polypeptide is Thymidine kinase (Gallus gallus (Chicken)).